The sequence spans 422 residues: UDP-N-acetylglucosamine 1-carboxyvinyltransferase (422 aa).

Residue 22-23 (KN) participates in phosphoenolpyruvate binding. Residue Arg93 coordinates UDP-N-acetyl-alpha-D-glucosamine. The active-site Proton donor is Cys117. Cys117 is subject to 2-(S-cysteinyl)pyruvic acid O-phosphothioketal. Residues 122–126 (RPVDL), Asp308, and Leu330 each bind UDP-N-acetyl-alpha-D-glucosamine.

The protein belongs to the EPSP synthase family. MurA subfamily.

It is found in the cytoplasm. It carries out the reaction phosphoenolpyruvate + UDP-N-acetyl-alpha-D-glucosamine = UDP-N-acetyl-3-O-(1-carboxyvinyl)-alpha-D-glucosamine + phosphate. The protein operates within cell wall biogenesis; peptidoglycan biosynthesis. Cell wall formation. Adds enolpyruvyl to UDP-N-acetylglucosamine. The polypeptide is UDP-N-acetylglucosamine 1-carboxyvinyltransferase (Helicobacter acinonychis (strain Sheeba)).